We begin with the raw amino-acid sequence, 494 residues long: 5'-3' exonuclease PLD3 (494 aa).

The Cytoplasmic segment spans residues 1–37 (MNPKVEYKQIQSHDEAENQVLQHECHQAKARKYYRCA). A helical; Signal-anchor for type II membrane protein transmembrane segment spans residues 38–58 (VVIAIIITLLFCVLASQLLLF). At 59-494 (PLFSITSQTT…LSSWKEKCIF (436 aa)) the chain is on the lumenal side. Asparagine 100 carries N-linked (GlcNAc...) asparagine glycosylation. Positions 198–225 (TDGVLHTKFWVVDSEHFYIGSANMDWRS) constitute a PLD phosphodiesterase 1 domain. Active-site residues include histidine 203, lysine 205, and aspartate 210. 5 N-linked (GlcNAc...) asparagine glycosylation sites follow: asparagine 238, asparagine 260, asparagine 270, asparagine 286, and asparagine 389. The PLD phosphodiesterase 2 domain occupies 413–439 (YARVNHNKYMVTDRVAYIGTSNWSGDY). Catalysis depends on residues histidine 418, lysine 420, and aspartate 425. N-linked (GlcNAc...) asparagine glycans are attached at residues asparagine 434, asparagine 451, and asparagine 477.

It belongs to the phospholipase D family. N-glycosylated. In terms of processing, proteolytically processed to a soluble form that is stable within endosomes and lysosomes. During transport through the secretory pathway becomes proteolysed by cysteine proteases, thereby releasing a stable soluble lysosomal lumenal polypeptide, whereas the transmembrane-bound fragment is rapidly degraded. Its transport route to lysosomes involves ubiquitination and the ESCRT complex. Post-translationally, ubiquitinated. Ubiquitination mediates sorting into lysosomes.

It is found in the endoplasmic reticulum membrane. It localises to the lysosome lumen. The protein localises to the early endosome membrane. Its subcellular location is the late endosome membrane. The protein resides in the golgi apparatus membrane. It is found in the endosome membrane. The enzyme catalyses Exonucleolytic cleavage in the 5'- to 3'-direction to yield nucleoside 3'-phosphates.. In terms of biological role, 5'-&gt;3' DNA exonuclease which digests single-stranded DNA (ssDNA). Regulates inflammatory cytokine responses via the degradation of nucleic acids, by reducing the concentration of ssDNA able to stimulate TLR9, a nucleotide-sensing receptor in collaboration with PLD4. May be important in myotube formation. Plays a role in lysosomal homeostasis. Involved in the regulation of endosomal protein sorting. This Xenopus tropicalis (Western clawed frog) protein is 5'-3' exonuclease PLD3 (pld3).